We begin with the raw amino-acid sequence, 731 residues long: 1,4-alpha-glucan branching enzyme GlgB (731 aa).

The active-site Nucleophile is the Asp408. Glu461 acts as the Proton donor in catalysis.

This sequence belongs to the glycosyl hydrolase 13 family. GlgB subfamily. As to quaternary structure, monomer.

The catalysed reaction is Transfers a segment of a (1-&gt;4)-alpha-D-glucan chain to a primary hydroxy group in a similar glucan chain.. The protein operates within glycan biosynthesis; glycogen biosynthesis. Catalyzes the formation of the alpha-1,6-glucosidic linkages in glycogen by scission of a 1,4-alpha-linked oligosaccharide from growing alpha-1,4-glucan chains and the subsequent attachment of the oligosaccharide to the alpha-1,6 position. The sequence is that of 1,4-alpha-glucan branching enzyme GlgB from Corynebacterium glutamicum (strain ATCC 13032 / DSM 20300 / JCM 1318 / BCRC 11384 / CCUG 27702 / LMG 3730 / NBRC 12168 / NCIMB 10025 / NRRL B-2784 / 534).